The following is a 122-amino-acid chain: uncharacterized protein (122 aa).

This is an uncharacterized protein from Schizosaccharomyces pombe (strain 972 / ATCC 24843) (Fission yeast).